Here is a 263-residue protein sequence, read N- to C-terminus: Pyridoxine 5'-phosphate synthase (263 aa).

Position 15 (N15) interacts with 3-amino-2-oxopropyl phosphate. Residue 17-18 (DH) coordinates 1-deoxy-D-xylulose 5-phosphate. R26 contributes to the 3-amino-2-oxopropyl phosphate binding site. H51 functions as the Proton acceptor in the catalytic mechanism. The 1-deoxy-D-xylulose 5-phosphate site is built by R53 and H58. E78 acts as the Proton acceptor in catalysis. Residue T108 coordinates 1-deoxy-D-xylulose 5-phosphate. H199 acts as the Proton donor in catalysis. 3-amino-2-oxopropyl phosphate contacts are provided by residues G200 and 221-222 (GH).

This sequence belongs to the PNP synthase family. As to quaternary structure, homooctamer; tetramer of dimers.

The protein localises to the cytoplasm. It carries out the reaction 3-amino-2-oxopropyl phosphate + 1-deoxy-D-xylulose 5-phosphate = pyridoxine 5'-phosphate + phosphate + 2 H2O + H(+). It functions in the pathway cofactor biosynthesis; pyridoxine 5'-phosphate biosynthesis; pyridoxine 5'-phosphate from D-erythrose 4-phosphate: step 5/5. In terms of biological role, catalyzes the complicated ring closure reaction between the two acyclic compounds 1-deoxy-D-xylulose-5-phosphate (DXP) and 3-amino-2-oxopropyl phosphate (1-amino-acetone-3-phosphate or AAP) to form pyridoxine 5'-phosphate (PNP) and inorganic phosphate. This chain is Pyridoxine 5'-phosphate synthase, found in Ralstonia nicotianae (strain ATCC BAA-1114 / GMI1000) (Ralstonia solanacearum).